Consider the following 348-residue polypeptide: Dihydroorotate dehydrogenase (quinone) (348 aa).

FMN is bound by residues 60-64 (AGLDK) and Thr-84. Lys-64 contacts substrate. Substrate is bound at residue 109 to 113 (NRMGF). 2 residues coordinate FMN: Asn-137 and Asn-170. A substrate-binding site is contributed by Asn-170. The active-site Nucleophile is the Ser-173. Position 175 (Asn-175) interacts with substrate. FMN-binding residues include Lys-215 and Thr-243. 244–245 (NT) is a binding site for substrate. FMN is bound by residues Gly-266, Gly-295, and 316 to 317 (YS).

The protein belongs to the dihydroorotate dehydrogenase family. Type 2 subfamily. Monomer. It depends on FMN as a cofactor.

It is found in the cell membrane. It catalyses the reaction (S)-dihydroorotate + a quinone = orotate + a quinol. It participates in pyrimidine metabolism; UMP biosynthesis via de novo pathway; orotate from (S)-dihydroorotate (quinone route): step 1/1. Its function is as follows. Catalyzes the conversion of dihydroorotate to orotate with quinone as electron acceptor. The sequence is that of Dihydroorotate dehydrogenase (quinone) from Nitrosospira multiformis (strain ATCC 25196 / NCIMB 11849 / C 71).